The following is a 217-amino-acid chain: ATP phosphoribosyltransferase (217 aa).

This sequence belongs to the ATP phosphoribosyltransferase family. Short subfamily. As to quaternary structure, heteromultimer composed of HisG and HisZ subunits.

The protein localises to the cytoplasm. It carries out the reaction 1-(5-phospho-beta-D-ribosyl)-ATP + diphosphate = 5-phospho-alpha-D-ribose 1-diphosphate + ATP. The protein operates within amino-acid biosynthesis; L-histidine biosynthesis; L-histidine from 5-phospho-alpha-D-ribose 1-diphosphate: step 1/9. Functionally, catalyzes the condensation of ATP and 5-phosphoribose 1-diphosphate to form N'-(5'-phosphoribosyl)-ATP (PR-ATP). Has a crucial role in the pathway because the rate of histidine biosynthesis seems to be controlled primarily by regulation of HisG enzymatic activity. This chain is ATP phosphoribosyltransferase, found in Prochlorococcus marinus (strain MIT 9313).